The primary structure comprises 397 residues: Enoyl-[acyl-carrier-protein] reductase [NADH] (397 aa).

NAD(+) is bound by residues 48–53 (GASTGY), 74–75 (FE), 111–112 (DA), and 139–140 (VA). A substrate-binding site is contributed by tyrosine 225. Tyrosine 235 acts as the Proton donor in catalysis. NAD(+) is bound by residues lysine 244 and 273–275 (VVT).

Belongs to the TER reductase family. As to quaternary structure, monomer.

The catalysed reaction is a 2,3-saturated acyl-[ACP] + NAD(+) = a (2E)-enoyl-[ACP] + NADH + H(+). It participates in lipid metabolism; fatty acid biosynthesis. In terms of biological role, involved in the final reduction of the elongation cycle of fatty acid synthesis (FAS II). Catalyzes the reduction of a carbon-carbon double bond in an enoyl moiety that is covalently linked to an acyl carrier protein (ACP). This chain is Enoyl-[acyl-carrier-protein] reductase [NADH], found in Burkholderia thailandensis (strain ATCC 700388 / DSM 13276 / CCUG 48851 / CIP 106301 / E264).